The following is a 244-amino-acid chain: Phosphoadenosine 5'-phosphosulfate reductase (244 aa).

Cys-239 acts as the Nucleophile; cysteine thiosulfonate intermediate in catalysis.

This sequence belongs to the PAPS reductase family. CysH subfamily.

The protein resides in the cytoplasm. It carries out the reaction [thioredoxin]-disulfide + sulfite + adenosine 3',5'-bisphosphate + 2 H(+) = [thioredoxin]-dithiol + 3'-phosphoadenylyl sulfate. The protein operates within sulfur metabolism; hydrogen sulfide biosynthesis; sulfite from sulfate: step 3/3. Functionally, catalyzes the formation of sulfite from phosphoadenosine 5'-phosphosulfate (PAPS) using thioredoxin as an electron donor. The protein is Phosphoadenosine 5'-phosphosulfate reductase of Salmonella choleraesuis (strain SC-B67).